A 456-amino-acid polypeptide reads, in one-letter code: Bifunctional protein GlmU (456 aa).

A pyrophosphorylase region spans residues M1–K228. Residues L11 to G14, K25, Q75, G80 to T81, Y102 to D104, G138, E153, N168, and N226 contribute to the UDP-N-acetyl-alpha-D-glucosamine site. Position 104 (D104) interacts with Mg(2+). N226 lines the Mg(2+) pocket. The interval L229–A249 is linker. The tract at residues G250–Q456 is N-acetyltransferase. UDP-N-acetyl-alpha-D-glucosamine is bound by residues R332 and K350. The Proton acceptor role is filled by H362. The UDP-N-acetyl-alpha-D-glucosamine site is built by Y365 and N376. Residues A379, N385 to Y386, S404, A422, and R439 contribute to the acetyl-CoA site.

In the N-terminal section; belongs to the N-acetylglucosamine-1-phosphate uridyltransferase family. It in the C-terminal section; belongs to the transferase hexapeptide repeat family. Homotrimer. The cofactor is Mg(2+).

The protein localises to the cytoplasm. The enzyme catalyses alpha-D-glucosamine 1-phosphate + acetyl-CoA = N-acetyl-alpha-D-glucosamine 1-phosphate + CoA + H(+). It carries out the reaction N-acetyl-alpha-D-glucosamine 1-phosphate + UTP + H(+) = UDP-N-acetyl-alpha-D-glucosamine + diphosphate. Its pathway is nucleotide-sugar biosynthesis; UDP-N-acetyl-alpha-D-glucosamine biosynthesis; N-acetyl-alpha-D-glucosamine 1-phosphate from alpha-D-glucosamine 6-phosphate (route II): step 2/2. It functions in the pathway nucleotide-sugar biosynthesis; UDP-N-acetyl-alpha-D-glucosamine biosynthesis; UDP-N-acetyl-alpha-D-glucosamine from N-acetyl-alpha-D-glucosamine 1-phosphate: step 1/1. It participates in bacterial outer membrane biogenesis; LPS lipid A biosynthesis. Functionally, catalyzes the last two sequential reactions in the de novo biosynthetic pathway for UDP-N-acetylglucosamine (UDP-GlcNAc). The C-terminal domain catalyzes the transfer of acetyl group from acetyl coenzyme A to glucosamine-1-phosphate (GlcN-1-P) to produce N-acetylglucosamine-1-phosphate (GlcNAc-1-P), which is converted into UDP-GlcNAc by the transfer of uridine 5-monophosphate (from uridine 5-triphosphate), a reaction catalyzed by the N-terminal domain. The protein is Bifunctional protein GlmU of Neisseria meningitidis serogroup C (strain 053442).